The sequence spans 506 residues: MSSGNRSEAVDVQKSYEVRTYGCQMNVHDSERLSGLLEGAGYVRAPEGSDGDADVVVFNTCAVRENADNKLYGNLGRLAPMKTKRPGMQIAVGGCLAQKDRDTIVKRAPWVDVVFGTHNIGKLPVLLERARVQEEAQIEIAESLEAFPSTLPTRRESAYAAWVSISVGCNNTCTFCIVPALRGKEKDRRTGDILAEIEALVAEGVCEITLLGQNVNAYGSDIGDREAFSKLLRACGRIEGLERVRFTSPHPRDFTDDVIAAMAETPNVMPQLHMPMQSGSDTVLKAMRRSYRQERFLGIIEKVRAAMPEAAISTDIIVGFPGETEEDFEQTMHAVREARFANAFTFQYSKRPGTPAADMDGQIPKEVVQERYMRLSALQEQISWDENKKQVGRTLDVMVAEGEGRKDGATQRLSGRAPDNRLVHFTQPEKAVRPGDVVTVEITYAAPHHLLAEGTPLAVRSTRAGDAWEKRTTGAAAKPAGVMLGLPGIGAPEPLPAAGAPACGIG.

The region spanning 14-132 (KSYEVRTYGC…LPVLLERARV (119 aa)) is the MTTase N-terminal domain. [4Fe-4S] cluster contacts are provided by cysteine 23, cysteine 61, cysteine 95, cysteine 169, cysteine 173, and cysteine 176. The Radical SAM core domain occupies 155–386 (RESAYAAWVS…ALQEQISWDE (232 aa)). One can recognise a TRAM domain in the interval 388–456 (KKQVGRTLDV…PHHLLAEGTP (69 aa)).

The protein belongs to the methylthiotransferase family. MiaB subfamily. As to quaternary structure, monomer. The cofactor is [4Fe-4S] cluster.

The protein resides in the cytoplasm. It carries out the reaction N(6)-dimethylallyladenosine(37) in tRNA + (sulfur carrier)-SH + AH2 + 2 S-adenosyl-L-methionine = 2-methylsulfanyl-N(6)-dimethylallyladenosine(37) in tRNA + (sulfur carrier)-H + 5'-deoxyadenosine + L-methionine + A + S-adenosyl-L-homocysteine + 2 H(+). Functionally, catalyzes the methylthiolation of N6-(dimethylallyl)adenosine (i(6)A), leading to the formation of 2-methylthio-N6-(dimethylallyl)adenosine (ms(2)i(6)A) at position 37 in tRNAs that read codons beginning with uridine. This chain is tRNA-2-methylthio-N(6)-dimethylallyladenosine synthase, found in Streptomyces griseus subsp. griseus (strain JCM 4626 / CBS 651.72 / NBRC 13350 / KCC S-0626 / ISP 5235).